Consider the following 179-residue polypeptide: Auxin-induced protein IAA6 (179 aa).

Positions 13 to 17 match the EAR-like (transcriptional repression) motif; that stretch reads LRLGL. The tract at residues 31 to 52 is disordered; it reads FSEIDGGVEENGGSGDRKSVDK. The PB1 domain maps to 75–163; that stretch reads KMYMKVSMDG…KRLRIMKRSD (89 aa).

Belongs to the Aux/IAA family. In terms of assembly, homodimers and heterodimers.

It localises to the nucleus. Aux/IAA proteins are short-lived transcriptional factors that function as repressors of early auxin response genes at low auxin concentrations. Repression is thought to result from the interaction with auxin response factors (ARFs), proteins that bind to the auxin-responsive promoter element (AuxRE). Formation of heterodimers with ARF proteins may alter their ability to modulate early auxin response genes expression. The protein is Auxin-induced protein IAA6 (IAA6) of Pisum sativum (Garden pea).